The chain runs to 79 residues: Three-finger toxin A2 (79 aa).

The signal sequence occupies residues 1-21 (MKTLLLTLVVVTIVCLDLGNS). 4 disulfides stabilise this stretch: C24/C41, C34/C59, C63/C71, and C72/C77.

It belongs to the three-finger toxin family. Short-chain subfamily. Expressed by the venom gland.

It is found in the secreted. This chain is Three-finger toxin A2, found in Micrurus laticollaris (Balsas coral snake).